Consider the following 363-residue polypeptide: NAD(P)H-quinone oxidoreductase subunit 1, chloroplastic (363 aa).

9 consecutive transmembrane segments (helical) span residues 30-50 (LVPI…IVWL), 98-118 (FSIG…VIPF), 129-149 (IGVF…LMSG), 165-185 (AAQS…ISLL), 203-223 (LWGW…ISSL), 248-268 (YSGI…LVSS), 269-289 (LFVT…IFVP), 300-320 (VFGT…FLFI), and 334-354 (DQLL…NLLL).

Belongs to the complex I subunit 1 family. As to quaternary structure, NDH is composed of at least 16 different subunits, 5 of which are encoded in the nucleus.

Its subcellular location is the plastid. It is found in the chloroplast thylakoid membrane. The catalysed reaction is a plastoquinone + NADH + (n+1) H(+)(in) = a plastoquinol + NAD(+) + n H(+)(out). It carries out the reaction a plastoquinone + NADPH + (n+1) H(+)(in) = a plastoquinol + NADP(+) + n H(+)(out). Functionally, NDH shuttles electrons from NAD(P)H:plastoquinone, via FMN and iron-sulfur (Fe-S) centers, to quinones in the photosynthetic chain and possibly in a chloroplast respiratory chain. The immediate electron acceptor for the enzyme in this species is believed to be plastoquinone. Couples the redox reaction to proton translocation, and thus conserves the redox energy in a proton gradient. The sequence is that of NAD(P)H-quinone oxidoreductase subunit 1, chloroplastic from Oenothera elata subsp. hookeri (Hooker's evening primrose).